The primary structure comprises 199 residues: WASH complex subunit 3 (199 aa).

Residues 47–76 (VCEEKLSALSLRIQQIETTLNILEAKLSSI) adopt a coiled-coil conformation. Residues 93-120 (NISNGHLPSQPDAQSVVVSPQSDNNSMN) are compositionally biased toward polar residues. 2 disordered regions span residues 93-136 (NISN…NITT) and 170-199 (PDLL…SFSD). Positions 183–192 (GEPEAEESSD) are enriched in acidic residues.

It belongs to the CCDC53 family. As to quaternary structure, component of the WASH complex.

This is WASH complex subunit 3 from Xenopus laevis (African clawed frog).